We begin with the raw amino-acid sequence, 612 residues long: Probable cytosolic Fe-S cluster assembly factor SJAG_02895 (612 aa).

Residue 13 to 20 (GKGGVGKS) coordinates ATP. Residues Cys-200 and Cys-203 each coordinate [4Fe-4S] cluster. 7 WD repeats span residues 287–326 (GHRG…LIHV), 330–370 (YHTR…WECV), 375–414 (GHEN…EFDC), 420–459 (EHTQ…WVQT), 464–503 (SHTS…EDAA), 528–566 (TFTE…STWH), and 574–612 (AHDV…DQTA).

It in the N-terminal section; belongs to the Mrp/NBP35 ATP-binding proteins family. NUBP2/CFD1 subfamily. In the C-terminal section; belongs to the WD repeat CIA1 family. In terms of assembly, heterotetramer of 2 nbp35 and 2 SJAG_02895 chains. [4Fe-4S] cluster is required as a cofactor.

The protein localises to the cytoplasm. Its subcellular location is the nucleus. Fusion protein of two essential components of the cytosolic iron-sulfur (Fe/S) protein assembly (CIA) machinery. Required for maturation of extramitochondrial Fe-S proteins. May form a heterotetramer with nubp35, functioning as a Fe-S scaffold complex, mediating the de novo assembly of an Fe-S cluster and its transfer to target apoproteins. The sequence is that of Probable cytosolic Fe-S cluster assembly factor SJAG_02895 from Schizosaccharomyces japonicus (strain yFS275 / FY16936) (Fission yeast).